The sequence spans 173 residues: 16S rRNA aminocarboxypropyltransferase (173 aa).

Thr25, Leu72, Leu96, and Ser115 together coordinate S-adenosyl-L-methionine.

Belongs to the TDD superfamily. TSR3 family.

Its subcellular location is the cytoplasm. It carries out the reaction an N(1)-methylpseudouridine in rRNA + S-adenosyl-L-methionine = N(1)-methyl-N(3)-[(3S)-3-amino-3-carboxypropyl]pseudouridine in rRNA + S-methyl-5'-thioadenosine + H(+). Aminocarboxypropyltransferase that catalyzes the aminocarboxypropyl transfer on pseudouridine corresponding to position 914 in M.jannaschii 16S rRNA. It constitutes the last step in biosynthesis of the hypermodified N1-methyl-N3-(3-amino-3-carboxypropyl) pseudouridine (m1acp3-Psi). The sequence is that of 16S rRNA aminocarboxypropyltransferase from Methanosarcina mazei (strain ATCC BAA-159 / DSM 3647 / Goe1 / Go1 / JCM 11833 / OCM 88) (Methanosarcina frisia).